The primary structure comprises 125 residues: Small ribosomal subunit protein eS6 (125 aa).

Belongs to the eukaryotic ribosomal protein eS6 family.

The polypeptide is Small ribosomal subunit protein eS6 (Thermococcus onnurineus (strain NA1)).